A 354-amino-acid polypeptide reads, in one-letter code: Uroporphyrinogen decarboxylase (354 aa).

Residues 27–31 (RQAGR), Asp-77, Tyr-154, Thr-209, and His-327 contribute to the substrate site.

This sequence belongs to the uroporphyrinogen decarboxylase family. In terms of assembly, homodimer.

The protein resides in the cytoplasm. The enzyme catalyses uroporphyrinogen III + 4 H(+) = coproporphyrinogen III + 4 CO2. It participates in porphyrin-containing compound metabolism; protoporphyrin-IX biosynthesis; coproporphyrinogen-III from 5-aminolevulinate: step 4/4. Its function is as follows. Catalyzes the decarboxylation of four acetate groups of uroporphyrinogen-III to yield coproporphyrinogen-III. This chain is Uroporphyrinogen decarboxylase, found in Psychromonas ingrahamii (strain DSM 17664 / CCUG 51855 / 37).